Reading from the N-terminus, the 1265-residue chain is Shugoshin 2 (1265 aa).

Positions 69 to 116 (KENSRRITTEKMLLQKEVEKLNFENTFLRLKLNNLNKKLIDIEALMNN) form a coiled coil. Disordered regions lie at residues 161-202 (LTSN…STQD), 230-287 (DVPP…NLSA), 305-339 (LNCN…SARE), and 381-447 (GIKK…GAED). Residues 190 to 202 (SSGSTTQPLSTQD) show a composition bias toward polar residues. A compositionally biased stretch (basic and acidic residues) spans 232–242 (PPRESHSHSDQ). A compositionally biased stretch (polar residues) spans 305–322 (LNCNNEINGHTNETNTEM). Composition is skewed to basic and acidic residues over residues 389-410 (KTNE…EKKR) and 425-446 (IGEK…RGAE). Residues 452–476 (FNNEQLAQMNEQLAQVNELKKMTLQ) are a coiled coil. A disordered region spans residues 499 to 526 (EQEETYSLSQSSGKFHQESKFDKGQNSL). Residues 503 to 512 (TYSLSQSSGK) show a composition bias toward polar residues. Positions 603–626 (EQNESNINKLRKKVNRKTEIISGM) form a coiled coil. Residues 1073 to 1083 (NKMTSKSKKRK) are compositionally biased toward basic residues. The disordered stretch occupies residues 1073 to 1093 (NKMTSKSKKRKTSIDPSPESH). Position 1144 is a phosphoserine (Ser-1144). The tract at residues 1200 to 1265 (KVNRRTQKSG…EPSLRDKMRR (66 aa)) is disordered. Residues 1217 to 1230 (DLSNTSFVSNNTAE) are compositionally biased toward polar residues. Residues 1231–1243 (SENKSEDLSSERT) show a composition bias toward basic and acidic residues.

Belongs to the shugoshin family. Part of an astrin (SPAG5) -kinastrin (SKAP) complex containing KNSTRN, SPAG5, PLK1, DYNLL1 and SGO2. Interacts with CDCA8. Directly interacts with PPP2CA.

Its subcellular location is the nucleus. It is found in the chromosome. The protein localises to the centromere. It localises to the kinetochore. In terms of biological role, cooperates with PPP2CA to protect centromeric cohesin from separase-mediated cleavage in oocytes specifically during meiosis I. Has a crucial role in protecting REC8 at centromeres from cleavage by separase. During meiosis, protects centromeric cohesion complexes until metaphase II/anaphase II transition, preventing premature release of meiosis-specific REC8 cohesin complexes from anaphase I centromeres. Is thus essential for an accurate gametogenesis. May act by targeting PPP2CA to centromeres, thus leading to cohesin dephosphorylation. Essential for recruiting KIF2C to the inner centromere and for correcting defective kinetochore attachments. Involved in centromeric enrichment of AUKRB in prometaphase. In Homo sapiens (Human), this protein is Shugoshin 2.